The chain runs to 160 residues: Phosphopantetheine adenylyltransferase (160 aa).

Threonine 10 contributes to the substrate binding site. Residues 10-11 (TF) and histidine 18 each bind ATP. The substrate site is built by lysine 42, leucine 74, and arginine 88. ATP is bound by residues 89–91 (GLR), glutamate 99, and 124–130 (NSFISST).

It belongs to the bacterial CoaD family. In terms of assembly, homohexamer. Mg(2+) serves as cofactor.

Its subcellular location is the cytoplasm. It carries out the reaction (R)-4'-phosphopantetheine + ATP + H(+) = 3'-dephospho-CoA + diphosphate. Its pathway is cofactor biosynthesis; coenzyme A biosynthesis; CoA from (R)-pantothenate: step 4/5. Functionally, reversibly transfers an adenylyl group from ATP to 4'-phosphopantetheine, yielding dephospho-CoA (dPCoA) and pyrophosphate. The protein is Phosphopantetheine adenylyltransferase of Pseudoalteromonas atlantica (strain T6c / ATCC BAA-1087).